A 457-amino-acid chain; its full sequence is Argininosuccinate lyase (457 aa).

This sequence belongs to the lyase 1 family. Argininosuccinate lyase subfamily.

The protein resides in the cytoplasm. The enzyme catalyses 2-(N(omega)-L-arginino)succinate = fumarate + L-arginine. The protein operates within amino-acid biosynthesis; L-arginine biosynthesis; L-arginine from L-ornithine and carbamoyl phosphate: step 3/3. The protein is Argininosuccinate lyase of Serratia proteamaculans (strain 568).